The chain runs to 205 residues: High frequency lysogenization protein HflD homolog (205 aa).

It belongs to the HflD family.

It localises to the cytoplasm. It is found in the cell inner membrane. The chain is High frequency lysogenization protein HflD homolog from Shewanella baltica (strain OS155 / ATCC BAA-1091).